A 622-amino-acid polypeptide reads, in one-letter code: Dynein axonemal assembly factor 1 (622 aa).

Residues 1–11 show a composition bias toward polar residues; the sequence is MHPEVSEQQAD. Positions 1 to 80 are disordered; that stretch reads MHPEVSEQQA…ARNDRDDRGP (80 aa). Residues 32 to 42 are compositionally biased toward basic and acidic residues; the sequence is VRKEEINETKE. A compositionally biased stretch (low complexity) spans 48–59; that stretch reads STTSCQSQKQQS. Residues 62–80 are compositionally biased toward basic and acidic residues; the sequence is SRLECRSGYARNDRDDRGP. LRR repeat units follow at residues 101–123, 124–145, 146–167, 168–189, 190–211, and 215–236; these read ALNDTLYLHFKGFDRIENLEEYT, GLRCLWLECNGIQRIENLQAQS, ELRCLFLQVNLLHKIENLEPLQ, KLDALNLSNNYIKTIENLSCLP, VLNTLQMAHNRLETVADIQHLG, and RLCVLDLSHNMLSDPEILSVLE. The region spanning 249–288 is the LRRCT domain; the sequence is NPVTKHIPNYRRTVTVRLKQLTYLDDRPVFPKDRACAEAW. Positions 326-336 are enriched in basic and acidic residues; it reads EERKKARDKGE. Residues 326–363 are disordered; that stretch reads EERKKARDKGETPLPDSEESSSTSPEAQEKPPLGETQE. Residues 337 to 351 are compositionally biased toward low complexity; the sequence is TPLPDSEESSSTSPE. Phosphoserine occurs at positions 349, 464, and 487. 2 disordered regions span residues 481–505 and 535–622; these read SSLSDDSDPELNDSSLPMLEHTPTG and TATT…FGLD. Polar residues-rich tracts occupy residues 535 to 552 and 568 to 578; these read TATTEVETQGQVFSTTRP and EPNQSLPAQSS.

It belongs to the DNAAF1 family.

It localises to the cell projection. Its subcellular location is the cilium. Functionally, cilium-specific protein required for the stability of the ciliary architecture. Plays a role in cytoplasmic preassembly of dynein arms. Involved in regulation of microtubule-based cilia and actin-based brush border microvilli. In Peromyscus californicus (California mouse), this protein is Dynein axonemal assembly factor 1 (Dnaaf1).